Here is a 510-residue protein sequence, read N- to C-terminus: Maturase K (510 aa).

It belongs to the intron maturase 2 family. MatK subfamily.

The protein localises to the plastid. Its subcellular location is the chloroplast. Functionally, usually encoded in the trnK tRNA gene intron. Probably assists in splicing its own and other chloroplast group II introns. The sequence is that of Maturase K from Thuja plicata (Western red-cedar).